A 472-amino-acid polypeptide reads, in one-letter code: Kynureninase 2 (472 aa).

Residues Leu133, Thr134, 162–165 (FPSD), Asp247, His250, and Tyr272 each bind pyridoxal 5'-phosphate. Lys273 is modified (N6-(pyridoxal phosphate)lysine). Pyridoxal 5'-phosphate is bound by residues Trp314 and Asn342.

It belongs to the kynureninase family. In terms of assembly, homodimer. Pyridoxal 5'-phosphate serves as cofactor.

The protein localises to the cytoplasm. The enzyme catalyses L-kynurenine + H2O = anthranilate + L-alanine + H(+). It catalyses the reaction 3-hydroxy-L-kynurenine + H2O = 3-hydroxyanthranilate + L-alanine + H(+). The protein operates within amino-acid degradation; L-kynurenine degradation; L-alanine and anthranilate from L-kynurenine: step 1/1. Its pathway is cofactor biosynthesis; NAD(+) biosynthesis; quinolinate from L-kynurenine: step 2/3. Functionally, catalyzes the cleavage of L-kynurenine (L-Kyn) and L-3-hydroxykynurenine (L-3OHKyn) into anthranilic acid (AA) and 3-hydroxyanthranilic acid (3-OHAA), respectively. The chain is Kynureninase 2 (kyn-2) from Neurospora crassa (strain ATCC 24698 / 74-OR23-1A / CBS 708.71 / DSM 1257 / FGSC 987).